The following is a 185-amino-acid chain: Putative RNA (cytidine(34)-2'-O)-methyltransferase (185 aa).

Positions 80, 105, and 126 each coordinate S-adenosyl-L-methionine.

Belongs to the class IV-like SAM-binding methyltransferase superfamily. RNA methyltransferase TrmH family. TrmL subfamily.

The protein resides in the cytoplasm. It catalyses the reaction cytidine(34) in tRNA + S-adenosyl-L-methionine = 2'-O-methylcytidine(34) in tRNA + S-adenosyl-L-homocysteine + H(+). The catalysed reaction is 5-carboxymethylaminomethyluridine(34) in tRNA(Leu) + S-adenosyl-L-methionine = 5-carboxymethylaminomethyl-2'-O-methyluridine(34) in tRNA(Leu) + S-adenosyl-L-homocysteine + H(+). In terms of biological role, could methylate the ribose at the nucleotide 34 wobble position in tRNA. The sequence is that of Putative RNA (cytidine(34)-2'-O)-methyltransferase from Lactobacillus gasseri (strain ATCC 33323 / DSM 20243 / BCRC 14619 / CIP 102991 / JCM 1131 / KCTC 3163 / NCIMB 11718 / NCTC 13722 / AM63).